A 437-amino-acid chain; its full sequence is GTPase Obg (437 aa).

One can recognise an Obg domain in the interval 2–160 (SMFLDTAKIS…RQLELELKIL (159 aa)). One can recognise an OBG-type G domain in the interval 161-338 (ADVGLVGFPS…LLEATAELLA (178 aa)). GTP is bound by residues 167-174 (GFPSVGKS), 192-196 (FTTIV), 214-217 (DLPG), 284-287 (NKMD), and 319-321 (SSL). The Mg(2+) site is built by Ser174 and Thr194. One can recognise an OCT domain in the interval 359–437 (GFAETEKDFE…IGKFEFEFVD (79 aa)).

This sequence belongs to the TRAFAC class OBG-HflX-like GTPase superfamily. OBG GTPase family. In terms of assembly, monomer. Mg(2+) is required as a cofactor.

It localises to the cytoplasm. An essential GTPase which binds GTP, GDP and possibly (p)ppGpp with moderate affinity, with high nucleotide exchange rates and a fairly low GTP hydrolysis rate. Plays a role in control of the cell cycle, stress response, ribosome biogenesis and in those bacteria that undergo differentiation, in morphogenesis control. The protein is GTPase Obg of Streptococcus pyogenes serotype M4 (strain MGAS10750).